The following is a 422-amino-acid chain: Exopolygalacturonase clone GBGE184 (422 aa).

Positions 1–31 are cleaved as a signal peptide; sequence MANARSLVAKANNINVGSLILMALVFGSCVA. PbH1 repeat units follow at residues 200-226, 227-248, 250-270, 280-301, and 310-331; these read TENVNIQNIKLTAPAESPNTDGIHLSN, ADNVSILDSTIATGDDCVSVGR, SNNVTVERVICGPGHGLSVGS, VSGIHVNNCTMIETDNGLRIKT, and AVDIKFENIIMQSVKNPIIIDQ. An N-linked (GlcNAc...) asparagine glycan is attached at Asn-229. The active-site Proton donor is Asp-241. A disulfide bridge connects residues Cys-243 and Cys-260. N-linked (GlcNAc...) asparagine glycosylation is present at Asn-252. His-264 is an active-site residue. Asn-287 is a glycosylation site (N-linked (GlcNAc...) asparagine). Cystine bridges form between Cys-366–Cys-372 and Cys-404–Cys-420.

Belongs to the glycosyl hydrolase 28 family.

It localises to the secreted. The protein localises to the cell wall. It carries out the reaction [(1-&gt;4)-alpha-D-galacturonosyl](n) + H2O = alpha-D-galacturonate + [(1-&gt;4)-alpha-D-galacturonosyl](n-1). In terms of biological role, may function in depolymerizing pectin during pollen development, germination, and tube growth. Acts as an exo-polygalacturonase. The sequence is that of Exopolygalacturonase clone GBGE184 (PGA3) from Arabidopsis thaliana (Mouse-ear cress).